A 132-amino-acid chain; its full sequence is Small ribosomal subunit protein uS8 (132 aa).

This sequence belongs to the universal ribosomal protein uS8 family. Part of the 30S ribosomal subunit. Contacts proteins S5 and S12.

One of the primary rRNA binding proteins, it binds directly to 16S rRNA central domain where it helps coordinate assembly of the platform of the 30S subunit. In Enterococcus faecalis (strain ATCC 700802 / V583), this protein is Small ribosomal subunit protein uS8.